We begin with the raw amino-acid sequence, 360 residues long: POU domain, class 5, transcription factor 1 (360 aa).

Disordered regions lie at residues Met1–Val51 and Gly88–Pro114. Positions His4 to Ser12 match the 9aaTAD motif. Phosphoserine; by MAPK is present on Ser111. Lys123 is covalently cross-linked (Glycyl lysine isopeptide (Lys-Gly) (interchain with G-Cter in SUMO)). Residues Asp138–Asp212 form the POU-specific domain. Positions 157 and 164 each coordinate DNA. DNA-binding stretches follow at residues Ser180–Arg186 and Ser193–Asn196. Positions Arg230–Ser289 form a DNA-binding region, homeobox. Residue Thr235 is modified to Phosphothreonine. Residues Ser236, Ser289, Ser290, and Ser355 each carry the phosphoserine modification.

This sequence belongs to the POU transcription factor family. Class-5 subfamily. As to quaternary structure, interacts with PKM. Interacts with WWP2. Interacts with UBE2I and ZSCAN10. Interacts with PCGF1. Interacts with ESRRB; recruits ESRRB near the POU5F1-SOX2 element in the NANOG proximal promoter; the interaction is DNA independent. Interacts with ZNF322. Interacts with MAPK8 and MAPK9; the interaction allows MAPK8 and MAPK9 to phosphorylate POU5F1 on Ser-355. Interacts (when phosphorylated on Ser-355) with FBXW8. Interacts with FBXW4. Interacts with SOX2 and SOX15; binds synergistically with either SOX2 or SOX15 to DNA. Interacts with DDX56. Post-translationally, sumoylation enhances the protein stability, DNA binding and transactivation activity. Sumoylation is required for enhanced YES1 expression. In terms of processing, ubiquitinated; undergoes 'Lys-63'-linked polyubiquitination by WWP2 leading to proteasomal degradation. ERK1/2-mediated phosphorylation at Ser-111 promotes nuclear exclusion and proteasomal degradation. Phosphorylation at Thr-235 and Ser-236 decrease DNA-binding and alters ability to activate transcription.

Its subcellular location is the cytoplasm. It localises to the nucleus. In terms of biological role, transcription factor that binds to the octamer motif (5'-ATTTGCAT-3'). Forms a trimeric complex with SOX2 or SOX15 on DNA and controls the expression of a number of genes involved in embryonic development such as YES1, FGF4, UTF1 and ZFP206. Critical for early embryogenesis and for embryonic stem cell pluripotency. The chain is POU domain, class 5, transcription factor 1 (POU5F1) from Pan troglodytes (Chimpanzee).